A 135-amino-acid polypeptide reads, in one-letter code: Putative hydrolase EbsB (135 aa).

The region spanning 1–128 (MLRIYVDAAT…ADMLARQALQ (128 aa)) is the RNase H type-1 domain. Positions 7, 45, 71, and 120 each coordinate Mg(2+).

The protein belongs to the RNase H family. EbsB subfamily. Mg(2+) is required as a cofactor.

The protein resides in the secreted. It localises to the cell wall. Its function is as follows. Seems to play some role in the cell surface expression of a chromosomally encoded receptor, named enterococcal binding substance (EBS), that mediates mating aggregate formation. Might interfere with the synthesis or assembly of EBS and function as a cell wall hydrolase. This chain is Putative hydrolase EbsB, found in Enterococcus faecalis (strain ATCC 700802 / V583).